The sequence spans 684 residues: 77 kDa membrane protein (684 aa).

The first 30 residues, 1–30 (MKFKSLITTTLALGVLASTGANFNNNEASA), serve as a signal peptide directing secretion. 6 MAP repeats span residues 45–154 (GYSK…EDKK), 156–265 (DKAN…ENKA), 266–374 (KRNY…KADR), 375–474 (YVPY…TGTK), 475–584 (AKAD…KKNN), and 586–684 (SNNV…ELKF).

The protein resides in the cell membrane. Functionally, binds various plasma and ECM-proteins. The protein is 77 kDa membrane protein of Staphylococcus aureus (strain COL).